We begin with the raw amino-acid sequence, 253 residues long: Large ribosomal subunit protein uL10m (253 aa).

The N-terminal 24 residues, 1-24, are a transit peptide targeting the mitochondrion; the sequence is MANLMQRSLPLTTTRTPVLQFLRF.

This sequence belongs to the universal ribosomal protein uL10 family. As to quaternary structure, component of the mitochondrial ribosome large subunit (39S) which comprises a 16S rRNA and about 50 distinct proteins.

It localises to the mitochondrion. The protein is Large ribosomal subunit protein uL10m (mRpL10) of Drosophila pseudoobscura pseudoobscura (Fruit fly).